Consider the following 140-residue polypeptide: Large ribosomal subunit protein uL11 (140 aa).

It belongs to the universal ribosomal protein uL11 family. Part of the ribosomal stalk of the 50S ribosomal subunit. Interacts with L10 and the large rRNA to form the base of the stalk. L10 forms an elongated spine to which L12 dimers bind in a sequential fashion forming a multimeric L10(L12)X complex. In terms of processing, one or more lysine residues are methylated.

Forms part of the ribosomal stalk which helps the ribosome interact with GTP-bound translation factors. In Dehalococcoides mccartyi (strain CBDB1), this protein is Large ribosomal subunit protein uL11.